Consider the following 396-residue polypeptide: Phosphoglycerate kinase (396 aa).

Substrate-binding positions include 21-23, arginine 36, 59-62, arginine 119, and arginine 156; these read DFN and HLGK. ATP contacts are provided by residues lysine 206, glutamate 325, and 352–355; that span reads GGDS.

The protein belongs to the phosphoglycerate kinase family. In terms of assembly, monomer.

The protein localises to the cytoplasm. It carries out the reaction (2R)-3-phosphoglycerate + ATP = (2R)-3-phospho-glyceroyl phosphate + ADP. The protein operates within carbohydrate degradation; glycolysis; pyruvate from D-glyceraldehyde 3-phosphate: step 2/5. This chain is Phosphoglycerate kinase, found in Staphylococcus carnosus (strain TM300).